A 310-amino-acid polypeptide reads, in one-letter code: Olfactory receptor 5P53 (310 aa).

The Extracellular portion of the chain corresponds to 1 to 25; that stretch reads MEAENHTTVAELIILGLTEDPKLCI. Residue Asn-5 is glycosylated (N-linked (GlcNAc...) asparagine). Residues 26–46 traverse the membrane as a helical segment; sequence VFFVIFLGVYIVTLVGNISII. Residues 47–54 are Cytoplasmic-facing; the sequence is TLIRISSQ. Residues 55–75 traverse the membrane as a helical segment; that stretch reads LHTPMYLFLSHLAFVDILYST. Residues 76 to 99 lie on the Extracellular side of the membrane; it reads SVSVIMHMELLGHGLALPVAACAA. A disulfide bond links Cys-97 and Cys-189. A helical transmembrane segment spans residues 100 to 120; it reads QLCITVSFGSAECFLLAAMAY. Residues 121 to 133 lie on the Cytoplasmic side of the membrane; that stretch reads DRYVAICSPLLYS. The helical transmembrane segment at 134 to 154 threads the bilayer; it reads TLMSPRVCFLLLGMSYVGGCM. Residues 155-196 lie on the Extracellular side of the membrane; the sequence is NGWTFTGCLLSLSFCGPNQIDHFFCDFSPLLKLSCSDVSIIG. The helical transmembrane segment at 197-217 threads the bilayer; the sequence is IIPSISSGSIIVVTVFVIAVS. Residues 218 to 237 are Cytoplasmic-facing; that stretch reads YIYILITILNMRSTEGRHKA. The chain crosses the membrane as a helical span at residues 238 to 258; that stretch reads FSTCTSHLTAVTLYYGTITFI. The Extracellular portion of the chain corresponds to 259-271; it reads YVMPKSNYSTEQN. N-linked (GlcNAc...) asparagine glycosylation is present at Asn-265. Residues 272 to 292 traverse the membrane as a helical segment; it reads KVLSVFYTVVIPMLNPLIYSL. The Cytoplasmic segment spans residues 293-310; the sequence is RNRDVKEALRKATVRVYS.

This sequence belongs to the G-protein coupled receptor 1 family.

Its subcellular location is the cell membrane. Its function is as follows. Potential odorant receptor. The protein is Olfactory receptor 5P53 of Mus musculus (Mouse).